Here is a 146-residue protein sequence, read N- to C-terminus: 3-hydroxyacyl-[acyl-carrier-protein] dehydratase FabZ (146 aa).

Histidine 47 is a catalytic residue.

This sequence belongs to the thioester dehydratase family. FabZ subfamily.

The protein localises to the cytoplasm. It catalyses the reaction a (3R)-hydroxyacyl-[ACP] = a (2E)-enoyl-[ACP] + H2O. In terms of biological role, involved in unsaturated fatty acids biosynthesis. Catalyzes the dehydration of short chain beta-hydroxyacyl-ACPs and long chain saturated and unsaturated beta-hydroxyacyl-ACPs. This chain is 3-hydroxyacyl-[acyl-carrier-protein] dehydratase FabZ, found in Methylococcus capsulatus (strain ATCC 33009 / NCIMB 11132 / Bath).